A 462-amino-acid chain; its full sequence is uncharacterized protein (462 aa).

Residues 12–70 form the TRAM domain; it reads MLKKNDIIQVAISDLSHEGAGVAKHDGFVFFVDNALPEEVIDMRVLKVNKNSGFGKVEA. Residues glutamine 294, tyrosine 323, glutamate 344, and aspartate 392 each contribute to the S-adenosyl-L-methionine site. The active-site Nucleophile is the cysteine 419.

It belongs to the class I-like SAM-binding methyltransferase superfamily. RNA M5U methyltransferase family.

This is an uncharacterized protein from Streptococcus pyogenes serotype M18 (strain MGAS8232).